The sequence spans 64 residues: Translation machinery-associated protein 7 homolog (64 aa).

Positions 1-64 (MSGRQGGKAK…GGGIKKSGKK (64 aa)) are disordered. Residues 21-50 (DLSEEDVEFKKKQQEEAKKIKEMAAKAGQR) are a coiled coil. A compositionally biased stretch (basic and acidic residues) spans 28–44 (EFKKKQQEEAKKIKEMA). Positions 53-64 (LLGGGIKKSGKK) are enriched in gly residues.

Belongs to the TMA7 family.

This chain is Translation machinery-associated protein 7 homolog, found in Caenorhabditis briggsae.